A 62-amino-acid polypeptide reads, in one-letter code: MKFLVFAFILALMVSMIGADSSEEKFLRRIGRFGYGYGPYQPVPEQPLYPQPYQPQYQQYTF.

A signal peptide spans 1–19 (MKFLVFAFILALMVSMIGA). The hydroxyapatite-binding; inhibits crystal growth stretch occupies residues 20–25 (DSSEEK). 2 positions are modified to phosphoserine: Ser-21 and Ser-22. Residues 25–56 (KFLRRIGRFGYGYGPYQPVPEQPLYPQPYQPQ) constitute a cross-link (isoglutamyl lysine isopeptide (Lys-Gln); in form cyclo-statherin Q-37). Residues 25–58 (KFLRRIGRFGYGYGPYQPVPEQPLYPQPYQPQYQ) constitute a cross-link (isoglutamyl lysine isopeptide (Lys-Gln); in form cyclo-statherin Q-39). The hydrophobic; inhibits precipitation of calcium phosphate salts stretch occupies residues 38-62 (GPYQPVPEQPLYPQPYQPQYQQYTF).

This sequence belongs to the histatin/statherin family. Post-translationally, substrate for transglutaminase-2. More than 95% of the cyclized peptide is cyclo-statherin Q-37, and less than 5% is cyclo-statherin Q-39. Cyclized forms account for about 1% of total statherin in saliva. In terms of processing, sulfated on tyrosine residues. In terms of tissue distribution, secreted by parotid and submandibular glands.

The protein localises to the secreted. Salivary protein that stabilizes saliva supersaturated with calcium salts by inhibiting the precipitation of calcium phosphate salts. It also modulates hydroxyapatite crystal formation on the tooth surface. This chain is Statherin (STATH), found in Homo sapiens (Human).